Here is a 417-residue protein sequence, read N- to C-terminus: Serine hydroxymethyltransferase (417 aa).

An N6-acetyllysine modification is found at Lys54. (6S)-5,6,7,8-tetrahydrofolate is bound by residues Leu121 and 125-127 (GHL). Residue Lys229 is modified to N6-(pyridoxal phosphate)lysine. N6-acetyllysine is present on residues Lys250, Lys285, and Lys354. Residue 355-357 (SPF) coordinates (6S)-5,6,7,8-tetrahydrofolate. At Lys375 the chain carries N6-acetyllysine.

It belongs to the SHMT family. Homodimer. Requires pyridoxal 5'-phosphate as cofactor.

It is found in the cytoplasm. It carries out the reaction (6R)-5,10-methylene-5,6,7,8-tetrahydrofolate + glycine + H2O = (6S)-5,6,7,8-tetrahydrofolate + L-serine. It participates in one-carbon metabolism; tetrahydrofolate interconversion. The protein operates within amino-acid biosynthesis; glycine biosynthesis; glycine from L-serine: step 1/1. Its function is as follows. Catalyzes the reversible interconversion of serine and glycine with tetrahydrofolate (THF) serving as the one-carbon carrier. This reaction serves as the major source of one-carbon groups required for the biosynthesis of purines, thymidylate, methionine, and other important biomolecules. Also exhibits THF-independent aldolase activity toward beta-hydroxyamino acids, producing glycine and aldehydes, via a retro-aldol mechanism. The sequence is that of Serine hydroxymethyltransferase from Shigella sonnei (strain Ss046).